The following is a 215-amino-acid chain: Cytochrome b6 (215 aa).

A helical transmembrane segment spans residues 32 to 52 (IFYCLGGITLTCFLVQVATGF). A heme c-binding site is contributed by Cys-35. Positions 86 and 100 each coordinate heme b. 3 helical membrane passes run 90-110 (ASMM…TGGF), 116-136 (LTWV…VTGY), and 186-206 (LHTF…FSMI). Residues His-187 and His-202 each contribute to the heme b site.

Belongs to the cytochrome b family. PetB subfamily. The 4 large subunits of the cytochrome b6-f complex are cytochrome b6, subunit IV (17 kDa polypeptide, PetD), cytochrome f and the Rieske protein, while the 4 small subunits are PetG, PetL, PetM and PetN. The complex functions as a dimer. Heme b serves as cofactor. Heme c is required as a cofactor.

The protein resides in the plastid. It localises to the chloroplast thylakoid membrane. Its function is as follows. Component of the cytochrome b6-f complex, which mediates electron transfer between photosystem II (PSII) and photosystem I (PSI), cyclic electron flow around PSI, and state transitions. This is Cytochrome b6 from Lotus japonicus (Lotus corniculatus var. japonicus).